The primary structure comprises 438 residues: Acid phosphatase type 7 (438 aa).

Residues Met1–Gly23 form the signal peptide. Fe cation-binding residues include Asp141, Asp170, and Tyr173. Zn(2+) is bound at residue Asp170. Residue Asn205 participates in Zn(2+) binding. The N-linked (GlcNAc...) asparagine glycan is linked to Asn211. Zn(2+) is bound by residues His286 and His333. Residue His335 coordinates Fe cation. N-linked (GlcNAc...) asparagine glycosylation is found at Asn350 and Asn404.

The protein belongs to the metallophosphoesterase superfamily. Purple acid phosphatase family. The cofactor is Fe cation. Zn(2+) is required as a cofactor.

The protein resides in the secreted. The enzyme catalyses a phosphate monoester + H2O = an alcohol + phosphate. This Mus musculus (Mouse) protein is Acid phosphatase type 7.